Here is a 150-residue protein sequence, read N- to C-terminus: MSDSVEIFTDGACKGNPGPGGWGALLVCKGVEKELWGGEANTTNNRMELMAAIRGLEELKRQCDVQLVTDSQYVMKGINEWMANWKKRGWKTAAKEPVKNADLWQQLDEQVNRHNVTWKWVRGHTGHHGNERADQLANRGVDEVRGYKQP.

The region spanning 1-142 (MSDSVEIFTD…ADQLANRGVD (142 aa)) is the RNase H type-1 domain. Residues aspartate 10, glutamate 48, aspartate 70, and aspartate 134 each coordinate Mg(2+).

This sequence belongs to the RNase H family. As to quaternary structure, monomer. It depends on Mg(2+) as a cofactor.

The protein resides in the cytoplasm. The enzyme catalyses Endonucleolytic cleavage to 5'-phosphomonoester.. In terms of biological role, endonuclease that specifically degrades the RNA of RNA-DNA hybrids. This Pseudomonas fluorescens (strain ATCC BAA-477 / NRRL B-23932 / Pf-5) protein is Ribonuclease H.